The primary structure comprises 760 residues: Prolyl endopeptidase FAP (760 aa).

The Cytoplasmic segment spans residues methionine 1–tryptophan 4. A helical; Signal-anchor for type II membrane protein membrane pass occupies residues leucine 5 to valine 25. Over leucine 26–aspartate 760 the chain is Extracellular. Residues asparagine 49, asparagine 92, and asparagine 99 are each glycosylated (N-linked (GlcNAc...) asparagine). Glutamate 203 and glutamate 204 together coordinate substrate. Asparagine 227 and asparagine 314 each carry an N-linked (GlcNAc...) asparagine glycan. Intrachain disulfides connect cysteine 321-cysteine 332, cysteine 438-cysteine 441, and cysteine 448-cysteine 466. Residues threonine 481–lysine 512 are a coiled coil. Catalysis depends on serine 624, which acts as the Charge relay system. A disulfide bond links cysteine 643 and cysteine 755. The N-linked (GlcNAc...) asparagine glycan is linked to asparagine 679. Catalysis depends on charge relay system residues aspartate 702 and histidine 734.

It belongs to the peptidase S9B family. Homodimer; homodimerization is required for activity of both plasma membrane and soluble forms. The monomer is inactive. Heterodimer with DPP4. Interacts with PLAUR; the interaction occurs at the cell surface of invadopodia membranes. Interacts with ITGB1. Interacts with ITGA3. Associates with integrin alpha-3/beta-1; the association occurs in a collagen-dependent manner at the cell surface of invadopodia membranes. In terms of processing, N-glycosylated. The N-terminus may be blocked.

The protein resides in the cell surface. Its subcellular location is the cell membrane. The protein localises to the cell projection. It localises to the lamellipodium membrane. It is found in the invadopodium membrane. The protein resides in the ruffle membrane. Its subcellular location is the membrane. The protein localises to the secreted. The enzyme catalyses Release of an N-terminal dipeptide, Xaa-Yaa-|-Zaa-, from a polypeptide, preferentially when Yaa is Pro, provided Zaa is neither Pro nor hydroxyproline.. The catalysed reaction is Hydrolysis of Pro-|-Xaa &gt;&gt; Ala-|-Xaa in oligopeptides.. Its activity is regulated as follows. Gelatinase activity is inhibited by serine-protease inhibitors, such as phenylmethylsulfonyl fluoride (PMSF), 4-(2-aminoethyl)-benzenesulfonyl fluoride hydrochloride (AEBSF), 4-amidino phenylsulfonyl fluoride (APSF) and diisopropyl fluorophosphate (DFP), N-ethylmaleimide (NEM) and phenylmethylsulfonyl fluoride (PMSF). Dipeptidyl peptidase activity is inhibited by 2,2'-azino-bis(3-ethylbenzthiazoline-6-sulfonic acid), diisopropylfluorophosphate (DFP). Prolyl endopeptidase activity is inhibited by the boronic acid peptide Ac-Gly-BoroPro, Ac-Gly-Pro-chloromethyl ketone and Thr-Ser-Gly-chloromethyl ketone. Cell surface glycoprotein serine protease that participates in extracellular matrix degradation and involved in many cellular processes including tissue remodeling, fibrosis, wound healing, inflammation and tumor growth. Both plasma membrane and soluble forms exhibit post-proline cleaving endopeptidase activity, with a marked preference for Ala/Ser-Gly-Pro-Ser/Asn/Ala consensus sequences, on substrate such as alpha-2-antiplasmin SERPINF2 and SPRY2. Degrade also gelatin, heat-denatured type I collagen, but not native collagen type I and IV, vibronectin, tenascin, laminin, fibronectin, fibrin or casein. Also has dipeptidyl peptidase activity, exhibiting the ability to hydrolyze the prolyl bond two residues from the N-terminus of synthetic dipeptide substrates provided that the penultimate residue is proline, with a preference for Ala-Pro, Ile-Pro, Gly-Pro, Arg-Pro and Pro-Pro. Natural neuropeptide hormones for dipeptidyl peptidase are the neuropeptide Y (NPY), peptide YY (PYY), substance P (TAC1) and brain natriuretic peptide 32 (NPPB). The plasma membrane form, in association with either DPP4, PLAUR or integrins, is involved in the pericellular proteolysis of the extracellular matrix (ECM), and hence promotes cell adhesion, migration and invasion through the ECM. Plays a role in tissue remodeling during development and wound healing. Participates in the cell invasiveness towards the ECM in malignant melanoma cancers. Enhances tumor growth progression by increasing angiogenesis, collagen fiber degradation and apoptosis and by reducing antitumor response of the immune system. Promotes glioma cell invasion through the brain parenchyma by degrading the proteoglycan brevican. Acts as a tumor suppressor in melanocytic cells through regulation of cell proliferation and survival in a serine protease activity-independent manner. This Bos taurus (Bovine) protein is Prolyl endopeptidase FAP.